The primary structure comprises 131 residues: Small ribosomal subunit protein uS8 (131 aa).

It belongs to the universal ribosomal protein uS8 family. In terms of assembly, part of the 30S ribosomal subunit. Contacts proteins S5 and S12.

Functionally, one of the primary rRNA binding proteins, it binds directly to 16S rRNA central domain where it helps coordinate assembly of the platform of the 30S subunit. The protein is Small ribosomal subunit protein uS8 of Paraburkholderia xenovorans (strain LB400).